The primary structure comprises 1180 residues: Lon protease homolog 2, peroxisomal (1180 aa).

One can recognise a Lon N-terminal domain in the interval 19-366 (LPTCKLDSNL…ELINMINQLI (348 aa)). Residues 416 to 465 (PISNRGNIKSFNNSENGNNNKTNGSGITSRRPKSNEDGGEVYDEEDDDEE) form a disordered region. The segment covering 422 to 444 (NIKSFNNSENGNNNKTNGSGITS) has biased composition (low complexity). Over residues 452-465 (DGGEVYDEEDDDEE) the composition is skewed to acidic residues. 667-674 (GPPGTGKT) lines the ATP pocket. The region spanning 924–1163 (NSRVGIVNGL…YDVMKILWGE (240 aa)) is the Lon proteolytic domain. Residues Ser-1032 and Lys-1075 contribute to the active site.

The protein belongs to the peptidase S16 family.

Its subcellular location is the peroxisome matrix. It catalyses the reaction Hydrolysis of proteins in presence of ATP.. ATP-dependent serine protease that mediates the selective degradation of misfolded and unassembled polypeptides in the peroxisomal matrix. Necessary for type 2 peroxisome targeting signal (PTS2)-containing protein processing and facilitates peroxisome matrix protein import. This is Lon protease homolog 2, peroxisomal from Scheffersomyces stipitis (strain ATCC 58785 / CBS 6054 / NBRC 10063 / NRRL Y-11545) (Yeast).